Reading from the N-terminus, the 143-residue chain is Transcriptional regulator MraZ (143 aa).

SpoVT-AbrB domains follow at residues 5–47 and 76–119; these read EYQH…PQDE and AAEL…STEK.

This sequence belongs to the MraZ family. Forms oligomers.

Its subcellular location is the cytoplasm. It localises to the nucleoid. The chain is Transcriptional regulator MraZ from Syntrophomonas wolfei subsp. wolfei (strain DSM 2245B / Goettingen).